The following is a 302-amino-acid chain: MNKSALLSPAPFGRLLTAMVTPFDDEGKVDYGLAADLANYLVDQGSDGIVVCGTTGESPTLSWQEQQKLLETVRNSLGSRAKVLAGTGSNSTSEAIEATKEAANSGADGALVVVPYYNKPPQEGLEVHFRAIANAAPKLPLMLYNIPGRTGCSISPSIVSKLMDCSNVVSFKAASGTTEEVTQLRNYCGSDLAIYSGDDALVLPMLSVGAVGVVSVASHLVAPNLKKLIESFLEGKYSEALYLHETLQPLFKSLFATTNPIPVKAALQLIGWSVGPPRSPLVSLNSEMKEELVKILSSLRLI.

Residue Thr55 coordinates pyruvate. Catalysis depends on Tyr144, which acts as the Proton donor/acceptor. Residue Lys172 is the Schiff-base intermediate with substrate of the active site. Val214 serves as a coordination point for pyruvate.

It belongs to the DapA family. Homotetramer; dimer of dimers.

The protein localises to the cytoplasm. It carries out the reaction L-aspartate 4-semialdehyde + pyruvate = (2S,4S)-4-hydroxy-2,3,4,5-tetrahydrodipicolinate + H2O + H(+). It functions in the pathway amino-acid biosynthesis; L-lysine biosynthesis via DAP pathway; (S)-tetrahydrodipicolinate from L-aspartate: step 3/4. Catalyzes the condensation of (S)-aspartate-beta-semialdehyde [(S)-ASA] and pyruvate to 4-hydroxy-tetrahydrodipicolinate (HTPA). The polypeptide is 4-hydroxy-tetrahydrodipicolinate synthase (Prochlorococcus marinus (strain NATL2A)).